A 96-amino-acid chain; its full sequence is Putative regulatory protein Teth514_1762 (96 aa).

It belongs to the RemA family.

This chain is Putative regulatory protein Teth514_1762, found in Thermoanaerobacter sp. (strain X514).